The primary structure comprises 829 residues: DNA ligase (829 aa).

NAD(+) contacts are provided by residues 38–42 (DAEYD), 87–88 (SL), and E127. The active-site N6-AMP-lysine intermediate is K129. NAD(+) is bound by residues R150, E187, K305, and K329. 4 residues coordinate Zn(2+): C455, C458, C473, and C479. Residues 534-564 (ETADKGSSENENGDAETVSGDLSKYNTQNGK) are disordered. The region spanning 752 to 829 (GINKAVAGKT…SEAELLTLLC (78 aa)) is the BRCT domain.

The protein belongs to the NAD-dependent DNA ligase family. LigA subfamily. The cofactor is Mg(2+). Requires Mn(2+) as cofactor.

It catalyses the reaction NAD(+) + (deoxyribonucleotide)n-3'-hydroxyl + 5'-phospho-(deoxyribonucleotide)m = (deoxyribonucleotide)n+m + AMP + beta-nicotinamide D-nucleotide.. Its function is as follows. DNA ligase that catalyzes the formation of phosphodiester linkages between 5'-phosphoryl and 3'-hydroxyl groups in double-stranded DNA using NAD as a coenzyme and as the energy source for the reaction. It is essential for DNA replication and repair of damaged DNA. The polypeptide is DNA ligase (Neisseria gonorrhoeae (strain ATCC 700825 / FA 1090)).